A 206-amino-acid chain; its full sequence is Large ribosomal subunit protein uL3 (206 aa).

The protein belongs to the universal ribosomal protein uL3 family. In terms of assembly, part of the 50S ribosomal subunit. Forms a cluster with proteins L14 and L19.

Functionally, one of the primary rRNA binding proteins, it binds directly near the 3'-end of the 23S rRNA, where it nucleates assembly of the 50S subunit. The chain is Large ribosomal subunit protein uL3 from Thermus thermophilus (strain ATCC BAA-163 / DSM 7039 / HB27).